A 243-amino-acid chain; its full sequence is Orotidine 5'-phosphate decarboxylase (243 aa).

Residues Asp-19, Lys-41, 69 to 78 (DLKFFDIPAT), Thr-124, Arg-185, Gln-194, Gly-214, and Arg-215 each bind substrate. Lys-71 functions as the Proton donor in the catalytic mechanism.

It belongs to the OMP decarboxylase family. Type 1 subfamily. Homodimer.

The enzyme catalyses orotidine 5'-phosphate + H(+) = UMP + CO2. It participates in pyrimidine metabolism; UMP biosynthesis via de novo pathway; UMP from orotate: step 2/2. Functionally, catalyzes the decarboxylation of orotidine 5'-monophosphate (OMP) to uridine 5'-monophosphate (UMP). In Xanthomonas axonopodis pv. citri (strain 306), this protein is Orotidine 5'-phosphate decarboxylase.